Reading from the N-terminus, the 205-residue chain is Rho GDP-dissociation inhibitor (205 aa).

Over residues 1–11 (MSVNNEVSADQ) the composition is skewed to polar residues. Positions 1–31 (MSVNNEVSADQHNPELEDDTFEHGPPVSLGE) are disordered. Phosphoserine is present on Ser63.

The protein belongs to the Rho GDI family.

It localises to the cytoplasm. Its subcellular location is the nucleus. Functionally, regulates the GDP/GTP exchange reaction of the Rho proteins by inhibiting the dissociation of GDP from them, and the subsequent binding of GTP to them. The chain is Rho GDP-dissociation inhibitor from Schizosaccharomyces pombe (strain 972 / ATCC 24843) (Fission yeast).